Consider the following 158-residue polypeptide: Sec-independent protein translocase protein TatB (158 aa).

A helical transmembrane segment spans residues 1–21 (MFGISFSELLLVGLVALLVLG). Residues 73 to 158 (DEARKMFAPN…HDSSLPPRAP (86 aa)) form a disordered region. The span at 80–90 (APNQPSENSPE) shows a compositional bias: low complexity.

It belongs to the TatB family. In terms of assembly, the Tat system comprises two distinct complexes: a TatABC complex, containing multiple copies of TatA, TatB and TatC subunits, and a separate TatA complex, containing only TatA subunits. Substrates initially bind to the TatABC complex, which probably triggers association of the separate TatA complex to form the active translocon.

The protein resides in the cell inner membrane. In terms of biological role, part of the twin-arginine translocation (Tat) system that transports large folded proteins containing a characteristic twin-arginine motif in their signal peptide across membranes. Together with TatC, TatB is part of a receptor directly interacting with Tat signal peptides. TatB may form an oligomeric binding site that transiently accommodates folded Tat precursor proteins before their translocation. The protein is Sec-independent protein translocase protein TatB of Pseudomonas syringae pv. syringae (strain B728a).